A 94-amino-acid polypeptide reads, in one-letter code: Small ribosomal subunit protein uS19 (94 aa).

This sequence belongs to the universal ribosomal protein uS19 family.

In terms of biological role, protein S19 forms a complex with S13 that binds strongly to the 16S ribosomal RNA. The polypeptide is Small ribosomal subunit protein uS19 (Anaplasma phagocytophilum (strain HZ)).